The chain runs to 121 residues: Aspartate 1-decarboxylase (121 aa).

Residue Ser25 is the Schiff-base intermediate with substrate; via pyruvic acid of the active site. Pyruvic acid (Ser) is present on Ser25. Thr57 lines the substrate pocket. Tyr58 acts as the Proton donor in catalysis. Position 73–75 (73–75 (GAA)) interacts with substrate.

Belongs to the PanD family. As to quaternary structure, heterooctamer of four alpha and four beta subunits. It depends on pyruvate as a cofactor. Is synthesized initially as an inactive proenzyme, which is activated by self-cleavage at a specific serine bond to produce a beta-subunit with a hydroxyl group at its C-terminus and an alpha-subunit with a pyruvoyl group at its N-terminus.

The protein localises to the cytoplasm. The catalysed reaction is L-aspartate + H(+) = beta-alanine + CO2. Its pathway is cofactor biosynthesis; (R)-pantothenate biosynthesis; beta-alanine from L-aspartate: step 1/1. Functionally, catalyzes the pyruvoyl-dependent decarboxylation of aspartate to produce beta-alanine. The protein is Aspartate 1-decarboxylase of Wolinella succinogenes (strain ATCC 29543 / DSM 1740 / CCUG 13145 / JCM 31913 / LMG 7466 / NCTC 11488 / FDC 602W) (Vibrio succinogenes).